Here is a 305-residue protein sequence, read N- to C-terminus: Mitochondrial uncoupling protein 2 (305 aa).

3 Solcar repeats span residues 10-104, 114-205, and 214-297; these read ISFL…VKTL, IPLY…IKET, and DSVL…VKKV. The next 6 membrane-spanning stretches (helical) occupy residues 16-36, 73-93, 120-140, 179-199, 220-240, and 270-290; these read FICSAFAACFAELCTIPLDTA, ISGLWKGVIAGLHRQCIYGGL, ILAALLTGAIAIIVANPTDLV, TGLGPNIARNAIVNAAELASY, LLAGLAAGFFAVCIGSPIDVV, and YKGFLPNFTRLGTWNAIMFLT.

It belongs to the mitochondrial carrier (TC 2.A.29) family.

The protein resides in the mitochondrion inner membrane. In terms of biological role, PUMPS are mitochondrial transporter proteins that create proton leaks across the inner mitochondrial membrane, thus uncoupling oxidative phosphorylation. This leads to a decrease in the efficiency of oxidative phosphorylation and an increase in heat production. May be involved in protecting plant cells against oxidative stress damage. The polypeptide is Mitochondrial uncoupling protein 2 (PUMP2) (Arabidopsis thaliana (Mouse-ear cress)).